The following is an 88-amino-acid chain: RNA-binding protein Hfq (88 aa).

The region spanning 10-70 is the Sm domain; sequence DRFLNILRTK…ISTILPAEYI (61 aa).

It belongs to the Hfq family. Homohexamer.

RNA chaperone that binds small regulatory RNA (sRNAs) and mRNAs to facilitate mRNA translational regulation in response to envelope stress, environmental stress and changes in metabolite concentrations. Also binds with high specificity to tRNAs. The polypeptide is RNA-binding protein Hfq (Fervidobacterium nodosum (strain ATCC 35602 / DSM 5306 / Rt17-B1)).